Here is a 407-residue protein sequence, read N- to C-terminus: Elongation factor Tu (407 aa).

The tr-type G domain occupies 10-217 (KPHVNVGTIG…TLDEYIPEPE (208 aa)). Positions 19–26 (GHVDHGKT) are G1. 19–26 (GHVDHGKT) is a binding site for GTP. Thr-26 is a binding site for Mg(2+). A G2 region spans residues 60 to 64 (GITIA). Residues 81–84 (DCPG) are G3. Residues 81–85 (DCPGH) and 136–139 (NKAD) each bind GTP. The interval 136–139 (NKAD) is G4. Residues 184-186 (SAL) form a G5 region.

The protein belongs to the TRAFAC class translation factor GTPase superfamily. Classic translation factor GTPase family. EF-Tu/EF-1A subfamily. Monomer.

The protein resides in the cytoplasm. The enzyme catalyses GTP + H2O = GDP + phosphate + H(+). Its function is as follows. GTP hydrolase that promotes the GTP-dependent binding of aminoacyl-tRNA to the A-site of ribosomes during protein biosynthesis. In Teredinibacter turnerae (strain ATCC 39867 / T7901), this protein is Elongation factor Tu.